The sequence spans 154 residues: Transcriptional repressor NrdR (154 aa).

Residues 3–34 (CPTCKYNGTRVVDSRPADDGNSIRRRRECEKC) fold into a zinc finger. Residues 49–139 (LIVVKKDGAR…VYRQFKDISV (91 aa)) enclose the ATP-cone domain.

This sequence belongs to the NrdR family. The cofactor is Zn(2+).

In terms of biological role, negatively regulates transcription of bacterial ribonucleotide reductase nrd genes and operons by binding to NrdR-boxes. The protein is Transcriptional repressor NrdR of Listeria innocua serovar 6a (strain ATCC BAA-680 / CLIP 11262).